Here is a 474-residue protein sequence, read N- to C-terminus: tRNA-2-methylthio-N(6)-dimethylallyladenosine synthase (474 aa).

The MTTase N-terminal domain occupies 3–120 (QKLHIKTWGC…LPEMINQIRG (118 aa)). Residues cysteine 12, cysteine 49, cysteine 83, cysteine 157, cysteine 161, and cysteine 164 each contribute to the [4Fe-4S] cluster site. The region spanning 143 to 375 (RAEGPTAFVS…QERINQQAAQ (233 aa)) is the Radical SAM core domain. One can recognise a TRAM domain in the interval 378 to 441 (RRMLGTEQRV…TNSLRGEVVR (64 aa)).

It belongs to the methylthiotransferase family. MiaB subfamily. In terms of assembly, monomer. [4Fe-4S] cluster is required as a cofactor.

The protein resides in the cytoplasm. It carries out the reaction N(6)-dimethylallyladenosine(37) in tRNA + (sulfur carrier)-SH + AH2 + 2 S-adenosyl-L-methionine = 2-methylsulfanyl-N(6)-dimethylallyladenosine(37) in tRNA + (sulfur carrier)-H + 5'-deoxyadenosine + L-methionine + A + S-adenosyl-L-homocysteine + 2 H(+). Catalyzes the methylthiolation of N6-(dimethylallyl)adenosine (i(6)A), leading to the formation of 2-methylthio-N6-(dimethylallyl)adenosine (ms(2)i(6)A) at position 37 in tRNAs that read codons beginning with uridine. This Haemophilus influenzae (strain PittGG) protein is tRNA-2-methylthio-N(6)-dimethylallyladenosine synthase.